We begin with the raw amino-acid sequence, 185 residues long: Elongation factor P (185 aa).

Belongs to the elongation factor P family.

It localises to the cytoplasm. The protein operates within protein biosynthesis; polypeptide chain elongation. Its function is as follows. Involved in peptide bond synthesis. Stimulates efficient translation and peptide-bond synthesis on native or reconstituted 70S ribosomes in vitro. Probably functions indirectly by altering the affinity of the ribosome for aminoacyl-tRNA, thus increasing their reactivity as acceptors for peptidyl transferase. This chain is Elongation factor P, found in Alkaliphilus metalliredigens (strain QYMF).